Here is a 344-residue protein sequence, read N- to C-terminus: GTPase Obg (344 aa).

The segment covering 1 to 12 has biased composition (polar residues); that stretch reads MFVDSASFSVSS. The disordered stretch occupies residues 1–36; the sequence is MFVDSASFSVSSGKGGPGCASFRREKHVPLGGPDGG. The Obg domain maps to 1 to 158; sequence MFVDSASFSV…RNIRLELKLI (158 aa). Positions 159–341 constitute an OBG-type G domain; the sequence is ADVGLVGFPN…LKFGLLEILK (183 aa). GTP contacts are provided by residues 165–172, 190–194, 212–215, 280–283, and 322–324; these read GFPNVGKS, FTTLT, DIPG, TRLD, and SSV. The Mg(2+) site is built by Ser172 and Thr192.

Belongs to the TRAFAC class OBG-HflX-like GTPase superfamily. OBG GTPase family. As to quaternary structure, monomer. Requires Mg(2+) as cofactor.

The protein localises to the cytoplasm. In terms of biological role, an essential GTPase which binds GTP, GDP and possibly (p)ppGpp with moderate affinity, with high nucleotide exchange rates and a fairly low GTP hydrolysis rate. Plays a role in control of the cell cycle, stress response, ribosome biogenesis and in those bacteria that undergo differentiation, in morphogenesis control. This chain is GTPase Obg, found in Campylobacter fetus subsp. fetus (strain 82-40).